Consider the following 546-residue polypeptide: Chromosomal replication initiator protein DnaA (546 aa).

A domain I, interacts with DnaA modulators region spans residues 1-85 (MSDPQAALRA…TRALSQHMGR (85 aa)). The interval 85 to 204 (RPCSLAVTIA…EPAHNPNREK (120 aa)) is domain II. Pro residues predominate over residues 96–111 (PPQPAPQEEPPAPAPQ). A disordered region spans residues 96 to 209 (PPQPAPQEEP…PNREKSLNPK (114 aa)). The segment covering 126 to 145 (QTQAFQQPTQSTQPAPASQP) has biased composition (low complexity). Over residues 191 to 209 (IPREEPAHNPNREKSLNPK) the composition is skewed to basic and acidic residues. Residues 205-421 (SLNPKHTFEN…GALIRVSAYS (217 aa)) form a domain III, AAA+ region region. ATP-binding residues include glycine 249, glycine 251, lysine 252, and threonine 253. The tract at residues 422–546 (SLVNEPISLE…TQRVKNHNQR (125 aa)) is domain IV, binds dsDNA.

It belongs to the DnaA family. Oligomerizes as a right-handed, spiral filament on DNA at oriC.

The protein localises to the cytoplasm. In terms of biological role, plays an essential role in the initiation and regulation of chromosomal replication. ATP-DnaA binds to the origin of replication (oriC) to initiate formation of the DNA replication initiation complex once per cell cycle. Binds the DnaA box (a 9 base pair repeat at the origin) and separates the double-stranded (ds)DNA. Forms a right-handed helical filament on oriC DNA; dsDNA binds to the exterior of the filament while single-stranded (ss)DNA is stabiized in the filament's interior. The ATP-DnaA-oriC complex binds and stabilizes one strand of the AT-rich DNA unwinding element (DUE), permitting loading of DNA polymerase. After initiation quickly degrades to an ADP-DnaA complex that is not apt for DNA replication. Binds acidic phospholipids. The polypeptide is Chromosomal replication initiator protein DnaA (Corynebacterium aurimucosum (strain ATCC 700975 / DSM 44827 / CIP 107346 / CN-1) (Corynebacterium nigricans)).